Here is a 505-residue protein sequence, read N- to C-terminus: RNA-splicing ligase RtcB homolog (505 aa).

Aspartate 119, cysteine 122, histidine 227, and histidine 259 together coordinate Mn(2+). Residue 226–230 coordinates GMP; it reads NHYAE. Residue serine 300 is modified to Phosphoserine. Histidine 353 contributes to the Mn(2+) binding site. GMP is bound by residues 353–354, 402–405, serine 409, and 428–431; these read HN, GGTM, and HGAG. Catalysis depends on histidine 428, which acts as the GMP-histidine intermediate. A Glycyl lysine isopeptide (Lys-Gly) (interchain with G-Cter in SUMO2) cross-link involves residue lysine 496. Lysine 504 contributes to the GMP binding site.

It belongs to the RtcB family. In terms of assembly, catalytic component of the tRNA-splicing ligase complex. Mn(2+) serves as cofactor.

The protein resides in the nucleus. Its subcellular location is the cytoplasm. It carries out the reaction a 3'-end 3'-phospho-ribonucleotide-RNA + a 5'-end dephospho-ribonucleoside-RNA + GTP = a ribonucleotidyl-ribonucleotide-RNA + GMP + diphosphate. The enzyme catalyses a 3'-end 2',3'-cyclophospho-ribonucleotide-RNA + a 5'-end dephospho-ribonucleoside-RNA + GTP + H2O = a ribonucleotidyl-ribonucleotide-RNA + GMP + diphosphate + H(+). Functionally, catalytic subunit of the tRNA-splicing ligase complex that acts by directly joining spliced tRNA halves to mature-sized tRNAs by incorporating the precursor-derived splice junction phosphate into the mature tRNA as a canonical 3',5'-phosphodiester. May act as an RNA ligase with broad substrate specificity, and may function toward other RNAs. The protein is RNA-splicing ligase RtcB homolog of Macaca fascicularis (Crab-eating macaque).